The chain runs to 285 residues: Homeobox protein Hox-A13b (285 aa).

Residues 219–278 (GRKKRVPYTKVQLKELEREYAANKFITKDKRRRISAQTNLTERQVTIWFQNRRVKEKKVV) constitute a DNA-binding region (homeobox).

Belongs to the Abd-B homeobox family.

It is found in the nucleus. Sequence-specific transcription factor which is part of a developmental regulatory system that provides cells with specific positional identities on the anterior-posterior axis. The protein is Homeobox protein Hox-A13b (hoxa13b) of Takifugu rubripes (Japanese pufferfish).